The following is a 1363-amino-acid chain: DNA-directed RNA polymerase subunit beta (1363 aa).

It belongs to the RNA polymerase beta chain family. The RNAP catalytic core consists of 2 alpha, 1 beta, 1 beta' and 1 omega subunit. When a sigma factor is associated with the core the holoenzyme is formed, which can initiate transcription.

It catalyses the reaction RNA(n) + a ribonucleoside 5'-triphosphate = RNA(n+1) + diphosphate. DNA-dependent RNA polymerase catalyzes the transcription of DNA into RNA using the four ribonucleoside triphosphates as substrates. The polypeptide is DNA-directed RNA polymerase subunit beta (Neorickettsia risticii (Ehrlichia risticii)).